Reading from the N-terminus, the 390-residue chain is Galactokinase (390 aa).

Substrate is bound at residue Glu-33–Asp-36. ATP is bound by residues Ser-67 and Gly-124–Ser-130. Ser-130 and Glu-162 together coordinate Mg(2+). Catalysis depends on Asp-174, which acts as the Proton acceptor. Tyr-224 is a substrate binding site.

Belongs to the GHMP kinase family. GalK subfamily.

It localises to the cytoplasm. It catalyses the reaction alpha-D-galactose + ATP = alpha-D-galactose 1-phosphate + ADP + H(+). The protein operates within carbohydrate metabolism; galactose metabolism. In terms of biological role, catalyzes the transfer of the gamma-phosphate of ATP to D-galactose to form alpha-D-galactose-1-phosphate (Gal-1-P). This is Galactokinase from Exiguobacterium sibiricum (strain DSM 17290 / CCUG 55495 / CIP 109462 / JCM 13490 / 255-15).